Reading from the N-terminus, the 349-residue chain is MTDPSRLVTPERRGDDLGDAALRPQNLSEFVGQQQARANLQVFIDAARKRKEALDHVLFVGPPGLGKTTLAQIVARELGVGFRATSGPVIAKAGDLAALLTNLEERDVLFIDEIHRLSPSVEEVLYPAMEDFQLDLIIGEGPAARSVKIDLSKFTLVGATTRAGLLTNPLRDRFGIPIRLNFYTIEELESIVTRGARVLGTPITADGANEIARRARGTPRIAGRLLRRVRDFASAADAEAIDRAIADHALGALEVDSAGLDAMDRRYLTTIALNYGGGPVGVETMAAALSEPRDAIEDIIEPYLIQCGYLQRTPRGRLLTDHAFRHLGLAAPSRDPAQFGLFGDTGDQE.

Residues 1 to 183 form a large ATPase domain (RuvB-L) region; sequence MTDPSRLVTP…FGIPIRLNFY (183 aa). Residues Leu-22, Arg-23, Gly-64, Lys-67, Thr-68, Thr-69, 130–132, Arg-173, Tyr-183, and Arg-220 contribute to the ATP site; that span reads EDF. Thr-68 provides a ligand contact to Mg(2+). Positions 184–254 are small ATPAse domain (RuvB-S); the sequence is TIEELESIVT…IADHALGALE (71 aa). A head domain (RuvB-H) region spans residues 257-349; it reads SAGLDAMDRR…GLFGDTGDQE (93 aa). 3 residues coordinate DNA: Arg-293, Arg-312, and Arg-317.

The protein belongs to the RuvB family. As to quaternary structure, homohexamer. Forms an RuvA(8)-RuvB(12)-Holliday junction (HJ) complex. HJ DNA is sandwiched between 2 RuvA tetramers; dsDNA enters through RuvA and exits via RuvB. An RuvB hexamer assembles on each DNA strand where it exits the tetramer. Each RuvB hexamer is contacted by two RuvA subunits (via domain III) on 2 adjacent RuvB subunits; this complex drives branch migration. In the full resolvosome a probable DNA-RuvA(4)-RuvB(12)-RuvC(2) complex forms which resolves the HJ.

It is found in the cytoplasm. It catalyses the reaction ATP + H2O = ADP + phosphate + H(+). Its function is as follows. The RuvA-RuvB-RuvC complex processes Holliday junction (HJ) DNA during genetic recombination and DNA repair, while the RuvA-RuvB complex plays an important role in the rescue of blocked DNA replication forks via replication fork reversal (RFR). RuvA specifically binds to HJ cruciform DNA, conferring on it an open structure. The RuvB hexamer acts as an ATP-dependent pump, pulling dsDNA into and through the RuvAB complex. RuvB forms 2 homohexamers on either side of HJ DNA bound by 1 or 2 RuvA tetramers; 4 subunits per hexamer contact DNA at a time. Coordinated motions by a converter formed by DNA-disengaged RuvB subunits stimulates ATP hydrolysis and nucleotide exchange. Immobilization of the converter enables RuvB to convert the ATP-contained energy into a lever motion, pulling 2 nucleotides of DNA out of the RuvA tetramer per ATP hydrolyzed, thus driving DNA branch migration. The RuvB motors rotate together with the DNA substrate, which together with the progressing nucleotide cycle form the mechanistic basis for DNA recombination by continuous HJ branch migration. Branch migration allows RuvC to scan DNA until it finds its consensus sequence, where it cleaves and resolves cruciform DNA. The chain is Holliday junction branch migration complex subunit RuvB from Rhodopseudomonas palustris (strain ATCC BAA-98 / CGA009).